Reading from the N-terminus, the 518-residue chain is Bifunctional purine biosynthesis protein PurH (518 aa).

An MGS-like domain is found at 1–146 (MSPIALLSVS…KNHQDVLVVT (146 aa)).

The protein belongs to the PurH family.

The enzyme catalyses (6R)-10-formyltetrahydrofolate + 5-amino-1-(5-phospho-beta-D-ribosyl)imidazole-4-carboxamide = 5-formamido-1-(5-phospho-D-ribosyl)imidazole-4-carboxamide + (6S)-5,6,7,8-tetrahydrofolate. The catalysed reaction is IMP + H2O = 5-formamido-1-(5-phospho-D-ribosyl)imidazole-4-carboxamide. It participates in purine metabolism; IMP biosynthesis via de novo pathway; 5-formamido-1-(5-phospho-D-ribosyl)imidazole-4-carboxamide from 5-amino-1-(5-phospho-D-ribosyl)imidazole-4-carboxamide (10-formyl THF route): step 1/1. Its pathway is purine metabolism; IMP biosynthesis via de novo pathway; IMP from 5-formamido-1-(5-phospho-D-ribosyl)imidazole-4-carboxamide: step 1/1. This is Bifunctional purine biosynthesis protein PurH from Prochlorococcus marinus (strain NATL1A).